Here is a 25-residue protein sequence, read N- to C-terminus: Large ribosomal subunit protein uL30 (25 aa).

Belongs to the universal ribosomal protein uL30 family. As to quaternary structure, part of the 50S ribosomal subunit.

The protein is Large ribosomal subunit protein uL30 (rpmD) of Pseudomonas fluorescens biotype A.